A 24-amino-acid polypeptide reads, in one-letter code: DYE-linked aldehyde dehydrogenase, alpha chain (24 aa).

Heterotetramer composed of an alpha, a beta and two gamma chains. Requires Mo-molybdopterin cytosine dinucleotide as cofactor.

Its function is as follows. Active with aldehydes and formate esters as substrates. This is DYE-linked aldehyde dehydrogenase, alpha chain from Amycolatopsis methanolica.